Reading from the N-terminus, the 208-residue chain is Large ribosomal subunit protein uL4 (208 aa).

Positions 45-96 (RQGTHKSKTRAEVRGGGRKPYRQKGTGNARQGSTRSPLMVGGGTIFGPTPHG) are disordered. Positions 69–80 (GTGNARQGSTRS) are enriched in polar residues.

Belongs to the universal ribosomal protein uL4 family. Part of the 50S ribosomal subunit.

Its function is as follows. One of the primary rRNA binding proteins, this protein initially binds near the 5'-end of the 23S rRNA. It is important during the early stages of 50S assembly. It makes multiple contacts with different domains of the 23S rRNA in the assembled 50S subunit and ribosome. Forms part of the polypeptide exit tunnel. This Chlorobium phaeovibrioides (strain DSM 265 / 1930) (Prosthecochloris vibrioformis (strain DSM 265)) protein is Large ribosomal subunit protein uL4.